The primary structure comprises 389 residues: Succinate--CoA ligase [ADP-forming] subunit beta (389 aa).

ATP contacts are provided by residues Lys-46, 53 to 55 (GRG), Glu-99, Cys-102, and Glu-107. Asn-199 and Asp-213 together coordinate Mg(2+). Substrate-binding positions include Asn-264 and 321–323 (GIV).

It belongs to the succinate/malate CoA ligase beta subunit family. In terms of assembly, heterotetramer of two alpha and two beta subunits. Mg(2+) is required as a cofactor.

The enzyme catalyses succinate + ATP + CoA = succinyl-CoA + ADP + phosphate. It catalyses the reaction GTP + succinate + CoA = succinyl-CoA + GDP + phosphate. Its pathway is carbohydrate metabolism; tricarboxylic acid cycle; succinate from succinyl-CoA (ligase route): step 1/1. Functionally, succinyl-CoA synthetase functions in the citric acid cycle (TCA), coupling the hydrolysis of succinyl-CoA to the synthesis of either ATP or GTP and thus represents the only step of substrate-level phosphorylation in the TCA. The beta subunit provides nucleotide specificity of the enzyme and binds the substrate succinate, while the binding sites for coenzyme A and phosphate are found in the alpha subunit. This chain is Succinate--CoA ligase [ADP-forming] subunit beta, found in Haemophilus influenzae (strain PittEE).